The following is a 544-amino-acid chain: MLQTQLQLQLQGVSIFHQLGLLIGLSLILSITWTAYTILSPYLRVKGKRIFNDRGRSELLWTGARKRFQAGARDLFKSAFAQNPDAFYIMTDTDVELILNSKYAAEVRNDKRFDIGKYNEDMFHGTIAGFEMFEDDHVLERVFVETVRNKLTRAIGKFVEPMSQEAADGLQKQWTDNTEWHALPLHQSILRTISQQSSRVFQGFPLCRNPDWLRITVNHTVTFFEAAESLKVWPHPLRPLAAKFLPLCRKLRAEAEEARGIIAPVLKERRARRTQQVEQSIEKNTKNEKKEDEDEDQNEDEETPGDMIEWAEQTANGAIYDPALLQMKVSLASIHTTSDLVSQAIFNLCSRPELVDDLRKEVISVIGQQGWVKTAIYQLKLMDSVLKETQRLKPISIGTMVRTTTSPVTFTDGLQVPPNTRTLVSCHNMWTDAVHANAAEFDGYRFLKLRQKPGQENWTQLVSTSNNHLGFGHGMHACPGRFFAATTAKVLLAHVVLKYDLKLLDDQKPDIIEHGAAQYANVWCGIGVRRRKEEIDLACPMATV.

Residues 19–39 traverse the membrane as a helical segment; the sequence is LGLLIGLSLILSITWTAYTIL. The tract at residues 273–305 is disordered; the sequence is RTQQVEQSIEKNTKNEKKEDEDEDQNEDEETPG. Positions 280 to 290 are enriched in basic and acidic residues; it reads SIEKNTKNEKK. A compositionally biased stretch (acidic residues) spans 291–304; sequence EDEDEDQNEDEETP. A heme-binding site is contributed by Cys478.

It belongs to the cytochrome P450 family. Heme is required as a cofactor.

Its subcellular location is the membrane. It participates in secondary metabolite biosynthesis; terpenoid biosynthesis. Cytochrome P450 monooxygenase; part of the cluster A that mediates the biosynthesis of chevalone E and its oxidized derivatives that possess a unique five-membered lactone ring and can synergistically enhance the cytotoxicity of doxorubicin (DOX) in breast cancer cells. Within the pathway, cle2 is involved in hydroxylation of the chavalone E scaffold at position C-20 and contributes with cle4 to the production of seven oxidation derivatives. The molecular scaffold is commonly biosynthesized by a series of enzymes including the non-reducing polyketide synthase (NR-PKS) cle1 that produces the alpha-pyrone triacetic acid lactone (TAL); The membrane-bound prenyltransferase cle5 that accepts TAL as its substrate to perform a C-3 geranylgeranylation reaction, in which the pathway-dedicated GGPS cle6 is required to provide GGPP, the other substrate of cle5; the FAD-dependent monooxygenase Cle3 that forms an (S)-epoxide ring at the terminal olefin of the geranylgeranyl group; and the terpene cyclase Cle7 that catalyzes the cyclization of the prenyl group that yields the pentacyclic pathway intermediate chevalone E. Chevalone E can derivatize into seven new oxidized analogs by the cytochrome P450 monooxygenases cle2 (acting at C-20) and cle4 (acting at C-11 and C-12). The chain is Cytochrome P450 monooxygenase cle2 from Aspergillus versicolor.